A 205-amino-acid chain; its full sequence is Delta-aminolevulinic acid dehydratase (205 aa).

The Zn(2+) site is built by Cys117, Cys119, and Cys127. The active-site Schiff-base intermediate with substrate is Lys192. Arg202 contacts substrate.

This sequence belongs to the ALAD family. Homooctamer. Zn(2+) is required as a cofactor.

The enzyme catalyses 2 5-aminolevulinate = porphobilinogen + 2 H2O + H(+). It functions in the pathway porphyrin-containing compound metabolism; protoporphyrin-IX biosynthesis; coproporphyrinogen-III from 5-aminolevulinate: step 1/4. In terms of biological role, catalyzes an early step in the biosynthesis of tetrapyrroles. Binds two molecules of 5-aminolevulinate per subunit, each at a distinct site, and catalyzes their condensation to form porphobilinogen. In Ruminiclostridium josui (Clostridium josui), this protein is Delta-aminolevulinic acid dehydratase (hemB).